Consider the following 194-residue polypeptide: dCTP deaminase (194 aa).

DCTP is bound by residues 110-115, Asp128, 136-138, Tyr171, Lys178, and Gln182; these read RSSLAR and VLE. Residue Glu138 is the Proton donor/acceptor of the active site. Residues 171–194 are disordered; sequence YNKRKNAKYKDQQEAVASRISQDS.

It belongs to the dCTP deaminase family. Homotrimer.

It carries out the reaction dCTP + H2O + H(+) = dUTP + NH4(+). It functions in the pathway pyrimidine metabolism; dUMP biosynthesis; dUMP from dCTP (dUTP route): step 1/2. Functionally, catalyzes the deamination of dCTP to dUTP. The sequence is that of dCTP deaminase from Shewanella amazonensis (strain ATCC BAA-1098 / SB2B).